We begin with the raw amino-acid sequence, 887 residues long: Pyruvate, phosphate dikinase 2 (887 aa).

A Phosphothreonine; by PDRP1 modification is found at Thr467. The active-site Tele-phosphohistidine intermediate is the His469. Residues Arg575, Arg632, Glu761, Gly782, Thr783, Asn784, and Asp785 each coordinate substrate. Residue Glu761 coordinates Mg(2+). A Mg(2+)-binding site is contributed by Asp785. The active-site Proton donor is the Cys847.

It belongs to the PEP-utilizing enzyme family. It depends on Mg(2+) as a cofactor.

It localises to the cytoplasm. The enzyme catalyses pyruvate + phosphate + ATP = phosphoenolpyruvate + AMP + diphosphate + H(+). Formation of phosphoenolpyruvate. This is Pyruvate, phosphate dikinase 2 (PPDK2) from Oryza sativa subsp. japonica (Rice).